The primary structure comprises 383 residues: Deoxyguanosinetriphosphate triphosphohydrolase-like protein (383 aa).

The HD domain occupies 62-198 (RLTHSLEVST…AALADDISYI (137 aa)).

This sequence belongs to the dGTPase family. Type 2 subfamily.

This Rickettsia felis (strain ATCC VR-1525 / URRWXCal2) (Rickettsia azadi) protein is Deoxyguanosinetriphosphate triphosphohydrolase-like protein.